A 290-amino-acid chain; its full sequence is 4-hydroxybenzoate octaprenyltransferase (290 aa).

The next 6 helical transmembrane spans lie at 41–61, 89–109, 133–153, 158–178, 202–224, and 269–289; these read WPLV…GCAM, WEAV…ILPL, FFAI…PMAF, GTVP…SVAY, FGRF…YAWI, and WLGG…GAAG.

This sequence belongs to the UbiA prenyltransferase family. Mg(2+) serves as cofactor.

It localises to the cell inner membrane. It carries out the reaction all-trans-octaprenyl diphosphate + 4-hydroxybenzoate = 4-hydroxy-3-(all-trans-octaprenyl)benzoate + diphosphate. It participates in cofactor biosynthesis; ubiquinone biosynthesis. Its function is as follows. Catalyzes the prenylation of para-hydroxybenzoate (PHB) with an all-trans polyprenyl group. Mediates the second step in the final reaction sequence of ubiquinone-8 (UQ-8) biosynthesis, which is the condensation of the polyisoprenoid side chain with PHB, generating the first membrane-bound Q intermediate 3-octaprenyl-4-hydroxybenzoate. This is 4-hydroxybenzoate octaprenyltransferase from Burkholderia vietnamiensis (strain G4 / LMG 22486) (Burkholderia cepacia (strain R1808)).